The chain runs to 288 residues: UTP--glucose-1-phosphate uridylyltransferase (288 aa).

Belongs to the UDPGP type 2 family.

It catalyses the reaction alpha-D-glucose 1-phosphate + UTP + H(+) = UDP-alpha-D-glucose + diphosphate. It functions in the pathway glycolipid metabolism; diglucosyl-diacylglycerol biosynthesis. Catalyzes the formation of UDP-glucose from glucose-1-phosphate and UTP. This is an intermediate step in the biosynthesis of diglucosyl-diacylglycerol (Glc2-DAG), i.e. a glycolipid found in the membrane, which is also used as a membrane anchor for lipoteichoic acid (LTA). The protein is UTP--glucose-1-phosphate uridylyltransferase (gtaB) of Staphylococcus epidermidis (strain ATCC 35984 / DSM 28319 / BCRC 17069 / CCUG 31568 / BM 3577 / RP62A).